Here is a 302-residue protein sequence, read N- to C-terminus: Sulfate adenylyltransferase subunit 2 (302 aa).

Positions 280 to 302 are disordered; the sequence is RQGRLIDSDQSASMEQKKRQGYF.

The protein belongs to the PAPS reductase family. CysD subfamily. As to quaternary structure, heterodimer composed of CysD, the smaller subunit, and CysN.

It carries out the reaction sulfate + ATP + H(+) = adenosine 5'-phosphosulfate + diphosphate. Its pathway is sulfur metabolism; hydrogen sulfide biosynthesis; sulfite from sulfate: step 1/3. With CysN forms the ATP sulfurylase (ATPS) that catalyzes the adenylation of sulfate producing adenosine 5'-phosphosulfate (APS) and diphosphate, the first enzymatic step in sulfur assimilation pathway. APS synthesis involves the formation of a high-energy phosphoric-sulfuric acid anhydride bond driven by GTP hydrolysis by CysN coupled to ATP hydrolysis by CysD. In Shewanella baltica (strain OS223), this protein is Sulfate adenylyltransferase subunit 2.